The following is a 168-amino-acid chain: Diphosphoinositol polyphosphate phosphohydrolase 1 (168 aa).

Methionine 1 is subject to N-acetylmethionine. Residues arginine 10, lysine 18–arginine 20, and serine 39–arginine 41 each bind substrate. In terms of domain architecture, Nudix hydrolase spans tyrosine 17–alanine 142. 2 residues coordinate Mg(2+): glycine 50 and glutamate 66. Residues glycine 51–glycine 72 carry the Nudix box motif. The active-site Proton acceptor is the glutamate 69. Residue glutamate 70 coordinates Mg(2+). Substrate-binding positions include arginine 89–histidine 91, arginine 115, and lysine 133.

This sequence belongs to the Nudix hydrolase family. DIPP subfamily. In terms of assembly, monomer. Requires Mg(2+) as cofactor. Mn(2+) serves as cofactor. It depends on Zn(2+) as a cofactor.

The protein localises to the cytoplasm. Its subcellular location is the nucleus. The catalysed reaction is diphospho-myo-inositol polyphosphate + H2O = myo-inositol polyphosphate + phosphate.. It carries out the reaction 5-diphospho-1D-myo-inositol 1,2,3,4,6-pentakisphosphate + H2O = 1D-myo-inositol hexakisphosphate + phosphate + H(+). It catalyses the reaction 3,5-bis(diphospho)-1D-myo-inositol 1,2,4,6-tetrakisphosphate + H2O = 3-diphospho-1D-myo-inositol 1,2,4,5,6-pentakisphosphate + phosphate + 2 H(+). The enzyme catalyses [phosphate](n+1) + n H2O = (n+1) phosphate + n H(+). The catalysed reaction is P(1),P(5)-bis(5'-adenosyl) pentaphosphate + H2O = ADP + ATP + 2 H(+). It carries out the reaction P(1),P(6)-bis(5'-adenosyl) hexaphosphate + H2O = 2 ATP + 2 H(+). It catalyses the reaction P(1),P(4)-bis(5'-adenosyl) tetraphosphate + H2O = AMP + ATP + 2 H(+). The enzyme catalyses a 5'-end (N(7)-methyl 5'-triphosphoguanosine)-ribonucleoside in mRNA + H2O = N(7)-methyl-GMP + a 5'-end diphospho-ribonucleoside in mRNA + 2 H(+). The catalysed reaction is a 5'-end (N(7)-methyl 5'-triphosphoguanosine)-ribonucleoside in mRNA + H2O = N(7)-methyl-GDP + a 5'-end phospho-ribonucleoside in mRNA + 2 H(+). Diphosphoinositol polyphosphate phosphohydrolase is inhibited by fluoride and InsP6. Its function is as follows. Cleaves a beta-phosphate from the diphosphate groups in PP-InsP5 (diphosphoinositol pentakisphosphate) and [PP]2-InsP4 (bisdiphosphoinositol tetrakisphosphate), suggesting that it may play a role in signal transduction. InsP6 (inositol hexakisphosphate) is not a substrate. Acts as a negative regulator of the ERK1/2 pathway. Also able to catalyze the hydrolysis of dinucleoside oligophosphates, with diadenosine 5',5'''-P1,P6-hexaphosphate (Ap6A) and diadenosine 5',5'''- P1,P5-pentaphosphate (Ap5A) being the preferred substrates. The major reaction products are ADP and p4a from Ap6A and ADP and ATP from Ap5A. Also able to hydrolyze 5- phosphoribose 1-diphosphate. Acts as a decapping enzyme that can hydrolyze both monomethylated and unmethylated capped RNAs. Hydrolyzes monomethylated capped RNA after both the alpha- and beta-phosphates generating m7GMP + ppRNA and m7GDP + pRNA. Modulates the stability of a subset of mRNAs implicated in cell motility. Divalent cations zinc, magnesium and manganese determine its substrate specificity. Exhibits endopolyphosphatase activity in the presence of zinc ions. Exhibits diphosphoinositol polyphosphate phosphohydrolase in the presence of magnesium ions and diadenosine hexaphosphate hydrolase activity in the presence of manganese ions. Plays an important role in limiting DNA damage and maintaining cell survival upon oxidative stress via its endopolyphosphatase activity. The polypeptide is Diphosphoinositol polyphosphate phosphohydrolase 1 (Rattus norvegicus (Rat)).